The chain runs to 154 residues: Peptide deformylase (154 aa).

Fe cation is bound by residues Cys-90 and His-132. Residue Glu-133 is part of the active site. Residue His-136 coordinates Fe cation.

This sequence belongs to the polypeptide deformylase family. Fe(2+) is required as a cofactor.

It catalyses the reaction N-terminal N-formyl-L-methionyl-[peptide] + H2O = N-terminal L-methionyl-[peptide] + formate. Its function is as follows. Removes the formyl group from the N-terminal Met of newly synthesized proteins. Requires at least a dipeptide for an efficient rate of reaction. N-terminal L-methionine is a prerequisite for activity but the enzyme has broad specificity at other positions. This is Peptide deformylase from Desulforudis audaxviator (strain MP104C).